Here is a 468-residue protein sequence, read N- to C-terminus: Transmembrane protein 151B (468 aa).

Residues 1–25 (MPEDGGGDSGDVPEIIPDGEPLREE) form a disordered region. The next 2 membrane-spanning stretches (helical) occupy residues 45–65 (CLLLTLLIHACGAVVAWCRLA) and 98–118 (YLYIPLAFVSLLYLLYLAECW). Residues 384-438 (VSSNSLPPARPSGPRLPFSRSRLSLGAGGRATPGVFRSLSGGPLGRRGEDTEPLE) are disordered.

It belongs to the TMEM151 family.

Its subcellular location is the membrane. This chain is Transmembrane protein 151B (TMEM151B), found in Bos taurus (Bovine).